Reading from the N-terminus, the 195-residue chain is U8 snoRNA-decapping enzyme (195 aa).

Residues 18-168 enclose the Nudix hydrolase domain; the sequence is GWRHACHALL…LENTFIGNAR (151 aa). Substrate-binding residues include histidine 24, arginine 50, and phenylalanine 57. Residues glycine 59, glutamate 76, glutamate 80, and histidine 99 each contribute to the Mn(2+) site. The Nudix box motif lies at 61–82; that stretch reads FVDLRDGSLEDGLNRELGEELG. 2 residues coordinate substrate: asparagine 166 and glutamine 170. Residue glutamate 173 coordinates Mn(2+).

The protein belongs to the Nudix hydrolase family. NUDT16 subfamily. As to quaternary structure, homodimer. Mg(2+) is required as a cofactor. Requires Mn(2+) as cofactor. It depends on Co(2+) as a cofactor.

The protein resides in the nucleus. Its subcellular location is the nucleolus. It localises to the nucleoplasm. It is found in the cytoplasm. The enzyme catalyses a 5'-end (N(7)-methyl 5'-triphosphoguanosine)-ribonucleoside in mRNA + H2O = N(7)-methyl-GDP + a 5'-end phospho-ribonucleoside in mRNA + 2 H(+). The catalysed reaction is IDP + H2O = IMP + phosphate + H(+). It carries out the reaction dIDP + H2O = dIMP + phosphate + H(+). It catalyses the reaction a 5'-end NAD(+)-phospho-ribonucleoside in mRNA + H2O = a 5'-end phospho-ribonucleoside in mRNA + NAD(+) + H(+). The enzyme catalyses a 5'-end FAD-phospho-ribonucleoside in mRNA + H2O = a 5'-end phospho-adenosine-phospho-ribonucleoside in mRNA + FMN + 2 H(+). The catalysed reaction is a 5'-end CoA-ribonucleoside in mRNA + H2O = a 5'-end phospho-adenosine-phospho-ribonucleoside in mRNA + (R)-4'-phosphopantetheine + 2 H(+). In terms of biological role, RNA-binding and decapping enzyme that catalyzes the cleavage of the cap structure of snoRNAs and mRNAs in a metal-dependent manner. Part of the U8 snoRNP complex that is required for the accumulation of mature 5.8S and 28S rRNA. Has diphosphatase activity and removes m7G and/or m227G caps from U8 snoRNA and leaves a 5'monophosphate on the RNA. Also catalyzes the cleavage of the cap structure on mRNAs. Does not hydrolyze cap analog structures like 7-methylguanosine nucleoside triphosphate (m7GpppG). Also hydrolysis m7G- and m227G U3-capped RNAs but with less efficiencies. Has broad substrate specificity with manganese or cobalt as cofactor and can act on various RNA species. Binds to the U8 snoRNA; metal is not required for RNA-binding. May play a role in the regulation of snoRNAs and mRNAs degradation. Also acts as a phosphatase; hydrolyzes the non-canonical purine nucleotides inosine diphosphate (IDP) and deoxyinosine diphosphate (dITP) as well as guanosine diphosphate (GDP), deoxyguanosine diphosphate (dGDP), xanthine diphosphate (XDP), inosine triphosphate (ITP) and deoxyinosine triphosphate (ITP) to their respective monophosphate derivatives and does not distinguish between the deoxy- and ribose forms. The order of activity with different substrates is IDP &gt; dIDP &gt;&gt; GDP = dGDP &gt; XDP = ITP = dITP. Binds strongly to GTP, ITP and XTP. Participates in the hydrolysis of dIDP/IDP and probably excludes non-canonical purines from RNA and DNA precursor pools, thus preventing their incorporation into RNA and DNA and avoiding chromosomal lesions. Exhibits decapping activity towards NAD-capped RNAs and FAD-capped RNAs. Exhibits decapping activity towards dpCoA-capped RNAs in vitro. In Bos taurus (Bovine), this protein is U8 snoRNA-decapping enzyme (NUDT16).